The primary structure comprises 440 residues: Tetratricopeptide repeat protein 5 (440 aa).

TPR repeat units follow at residues 7–61, 68–98, 103–130, 136–174, and 179–216; these read EEAK…EEVL, AQAL…AVKL, VEAW…SGAL, KVSL…AVQM, and GRSW…AEKV. The short motif at 13 to 24 is the Nuclear export signal element; the sequence is LQKLQGLVDRLY. Residue S203 is modified to Phosphoserine; by ATM. S221 carries the post-translational modification Phosphoserine; by CHEK2. One copy of the TPR 6 repeat lies at 224–253; it reads PDLHLNRATLHKYEESYGEALEGFSQAAAL. The tract at residues 285 to 287 is mediates interaction with 28S rRNA of ribosome-coding tubulin; it reads KPK.

As to quaternary structure, interacts with JMY and p300/EP300; the interaction occurs in the nucleus and augments the association between JMY and p300/EP300 in response to DNA damage. Interacts with PRMT5; the interaction is DNA damage-dependent and promotes PRMT5 interaction with p53/TP53 and subsequent methylation. Forms a complex with HSF1 and p300/EP300; these interactions augment chromatin-bound HSF1 and p300/EP300 histone acetyltransferase activity, resulting in enhanced heat-shock-responsive transcription. Interacts with JMY; the interaction occurs in the cytoplasm and results in the inhibition of JYM's nucleation activity. Interacts with ribosome-coding tubulin (via 60S subunit 28S rRNA and protein uL24/RPL26) and the N-terminal of nascent tubulin polypeptide (via alpha-tubulin MREC motif and beta-tubulin MREI motif); these interactions result in tubulin mRNA-targeted degradation. Interacts with ATP5F1B; the interaction occurs in the mitochondria and results in ATP production decrease. Interacts with p53/TP53; the interaction occurs in the mitochondria and results in increased apoptosis. In terms of processing, phosphorylation by ATM kinase induces nuclear accumulation while interfering with nuclear export, and phosphorylation by CHEK2 kinase enhances nuclear stability. Expressed in heart, brain, spleen, lung, liver, skeletal muscle, kidney and testis.

The protein resides in the nucleus. It localises to the cytoplasm. It is found in the cytoplasmic vesicle. Its subcellular location is the mitochondrion matrix. Functionally, cofactor involved in the regulation of various cellular mechanisms such as actin regulation, autophagy, chromatin regulation and DNA repair. In physiological conditions, interacts with cofactor JMY in the cytoplasm which prevents JMY's actin nucleation activity and ability to activate the Arp2/3 complex. Acts as a negative regulator of nutrient stress-induced autophagy by inhibiting JMY's interaction with MAP1LC3B, thereby preventing autophagosome formation. Involves in tubulin autoregulation by promoting its degradation in response to excess soluble tubulin. To do so, associates with the active ribosome near the ribosome exit tunnel and with nascent tubulin polypeptides early during their translation, triggering tubulin mRNA-targeted degradation. Following DNA damage, phosphorylated by DNA damage responsive protein kinases ATM and CHEK2, leading to its nuclear accumulation and stability. Nuclear TTC5/STRAP promotes the assembly of a stress-responsive p53/TP53 coactivator complex, which includes the coactivators JMY and p300, thereby increasing p53/TP53-dependent transcription and apoptosis. Also recruits arginine methyltransferase PRMT5 to p53/TP53 when DNA is damaged, allowing PRMT5 to methylate p53/TP53. In DNA stress conditions, also prevents p53/TP53 degradation by E3 ubiquitin ligase MDM2. Upon heat-shock stress, forms a chromatin-associated complex with heat-shock factor 1 HSF1 and p300/EP300 to stimulate heat-shock-responsive transcription, thereby increasing cell survival. Mitochondrial TTC5/STRAP interacts with ATP synthase subunit beta ATP5F1B which decreased ATP synthase activity and lowers mitochondrial ATP production, thereby regulating cellular respiration and mitochondrial-dependent apoptosis. Mitochondrial TTC5/STRAP also regulates p53/TP53-mediated apoptosis. The polypeptide is Tetratricopeptide repeat protein 5 (Mus musculus (Mouse)).